A 350-amino-acid polypeptide reads, in one-letter code: Protein-glutamate methylesterase/protein-glutamine glutaminase (350 aa).

In terms of domain architecture, Response regulatory spans 5 to 122 (TVLCVDDSAL…REGMLAYSEL (118 aa)). The residue at position 56 (Asp56) is a 4-aspartylphosphate. One can recognise a CheB-type methylesterase domain in the interval 153 to 345 (LLSSEKLIAV…KRMLAKISSG (193 aa)). Residues Ser165, His191, and Asp287 contribute to the active site.

It belongs to the CheB family. Phosphorylated by CheA. Phosphorylation of the N-terminal regulatory domain activates the methylesterase activity.

Its subcellular location is the cytoplasm. The enzyme catalyses [protein]-L-glutamate 5-O-methyl ester + H2O = L-glutamyl-[protein] + methanol + H(+). It catalyses the reaction L-glutaminyl-[protein] + H2O = L-glutamyl-[protein] + NH4(+). Its function is as follows. Involved in chemotaxis. Part of a chemotaxis signal transduction system that modulates chemotaxis in response to various stimuli. Catalyzes the demethylation of specific methylglutamate residues introduced into the chemoreceptors (methyl-accepting chemotaxis proteins or MCP) by CheR. Also mediates the irreversible deamidation of specific glutamine residues to glutamic acid. In Photorhabdus laumondii subsp. laumondii (strain DSM 15139 / CIP 105565 / TT01) (Photorhabdus luminescens subsp. laumondii), this protein is Protein-glutamate methylesterase/protein-glutamine glutaminase.